We begin with the raw amino-acid sequence, 431 residues long: Ribosomal RNA small subunit methyltransferase B (431 aa).

S-adenosyl-L-methionine contacts are provided by residues 254–260 (CAAPGGK), aspartate 277, aspartate 303, and aspartate 322. Residue cysteine 375 is the Nucleophile of the active site.

The protein belongs to the class I-like SAM-binding methyltransferase superfamily. RsmB/NOP family.

It is found in the cytoplasm. It carries out the reaction cytidine(967) in 16S rRNA + S-adenosyl-L-methionine = 5-methylcytidine(967) in 16S rRNA + S-adenosyl-L-homocysteine + H(+). In terms of biological role, specifically methylates the cytosine at position 967 (m5C967) of 16S rRNA. This is Ribosomal RNA small subunit methyltransferase B from Klebsiella pneumoniae subsp. pneumoniae (strain ATCC 700721 / MGH 78578).